The primary structure comprises 115 residues: Nucleoid-associated protein alr5067 (115 aa).

The protein belongs to the YbaB/EbfC family. As to quaternary structure, homodimer.

It is found in the cytoplasm. The protein resides in the nucleoid. Binds to DNA and alters its conformation. May be involved in regulation of gene expression, nucleoid organization and DNA protection. This is Nucleoid-associated protein alr5067 from Nostoc sp. (strain PCC 7120 / SAG 25.82 / UTEX 2576).